Here is a 357-residue protein sequence, read N- to C-terminus: MPKPRLLIAASGTGGHIFPALAVAGELSEFEIAWLGVPDRLENKLVPGRYPLHTVALQGLNRKPGPQWLEAASQTFAAYRYARNLLSQERFAGVFTTGGYIAAPAVLAARSLNLPAIGHESNVLPGKVIRYLARWMRSLGLGFAESATYVSGATTRWVGTPVRPEFLISPNPLLDVPVPPEAPLIVVMGGSQGARAINQMVGECAPGWLERGWWIVHLTGAGEYDAVREGTPDHPAYRIYAFWEKMAPLLSRADLAISRAGAATLSELLVTGTPSLLIPYPFAAEDHQSVNAAALVRAGAALQFSQAALSAPLLDRTVQALLDNPETLARMAASARRLAVPDAARRTADLVRECVRH.

UDP-N-acetyl-alpha-D-glucosamine is bound by residues 13–15, Asn122, Arg163, Ser191, and Gln288; that span reads TGG.

Belongs to the glycosyltransferase 28 family. MurG subfamily.

It is found in the cell inner membrane. It carries out the reaction di-trans,octa-cis-undecaprenyl diphospho-N-acetyl-alpha-D-muramoyl-L-alanyl-D-glutamyl-meso-2,6-diaminopimeloyl-D-alanyl-D-alanine + UDP-N-acetyl-alpha-D-glucosamine = di-trans,octa-cis-undecaprenyl diphospho-[N-acetyl-alpha-D-glucosaminyl-(1-&gt;4)]-N-acetyl-alpha-D-muramoyl-L-alanyl-D-glutamyl-meso-2,6-diaminopimeloyl-D-alanyl-D-alanine + UDP + H(+). The protein operates within cell wall biogenesis; peptidoglycan biosynthesis. Functionally, cell wall formation. Catalyzes the transfer of a GlcNAc subunit on undecaprenyl-pyrophosphoryl-MurNAc-pentapeptide (lipid intermediate I) to form undecaprenyl-pyrophosphoryl-MurNAc-(pentapeptide)GlcNAc (lipid intermediate II). This is UDP-N-acetylglucosamine--N-acetylmuramyl-(pentapeptide) pyrophosphoryl-undecaprenol N-acetylglucosamine transferase from Gloeobacter violaceus (strain ATCC 29082 / PCC 7421).